Consider the following 761-residue polypeptide: 5-methyltetrahydropteroyltriglutamate--homocysteine methyltransferase (761 aa).

5-methyltetrahydropteroyltri-L-glutamate contacts are provided by residues 16–19 (RELK) and Lys-116. L-homocysteine contacts are provided by residues 437 to 439 (IGS) and Glu-490. L-methionine contacts are provided by residues 437 to 439 (IGS) and Glu-490. 5-methyltetrahydropteroyltri-L-glutamate is bound by residues 521-522 (RC) and Trp-567. Asp-605 is a binding site for L-homocysteine. Asp-605 provides a ligand contact to L-methionine. Glu-611 lines the 5-methyltetrahydropteroyltri-L-glutamate pocket. The Zn(2+) site is built by His-647, Cys-649, and Glu-671. The active-site Proton donor is His-700. A Zn(2+)-binding site is contributed by Cys-732.

Belongs to the vitamin-B12 independent methionine synthase family. The cofactor is Zn(2+).

It carries out the reaction 5-methyltetrahydropteroyltri-L-glutamate + L-homocysteine = tetrahydropteroyltri-L-glutamate + L-methionine. Its pathway is amino-acid biosynthesis; L-methionine biosynthesis via de novo pathway; L-methionine from L-homocysteine (MetE route): step 1/1. Functionally, catalyzes the transfer of a methyl group from 5-methyltetrahydrofolate to homocysteine resulting in methionine formation. In Chromohalobacter salexigens (strain ATCC BAA-138 / DSM 3043 / CIP 106854 / NCIMB 13768 / 1H11), this protein is 5-methyltetrahydropteroyltriglutamate--homocysteine methyltransferase.